Reading from the N-terminus, the 313-residue chain is MATSANLDIGAQLIVEECPSSYSLSGMPDIKIEHQPDSSAEEGSAQGVAMGMKFILPNRFDMNVCSRFVKSLNEEDSKNIQDQVNSDLEVASVLFKAECNIHTSPSPGIQVRHVYTPSTTKHFSPIKQSTTLTNKHRGNEVSTTPLLANSLSVHQLAAQGEMLYLATRIEQENVINHTDEEGFTPLMWAAAHGQIAVVEFLLQNGADPQLLGKGRESALSLACSKGYTDIVKMLLDCGVDVNEYDWNGGTPLLYAVHGNHVKCVKMLLENGADPTIETDSGYNSMDLAVALGYRSVQQVIESHLLKLLQNIKE.

5 ANK repeats span residues 148–180, 181–213, 214–246, 247–279, and 280–313; these read ANSL…HTDE, EGFT…LLGK, GRES…EYDW, NGGT…IETD, and SGYN…NIKE.

Interacts (via ANK repeats) with CCDC8 (via PxLPxI/L motif); mediates the interaction with the 3M complex which is composed of CCDC8, CUL7 and OBSL1. Interacts (via ANK repeats) with HDAC4 (via PxLPxI/L motif). Interacts (via ANK repeats) with HDAC5 (via PxLPxI/L motif). Interacts (via ANK repeats) with LRP2/megalin (via PxLPxI/L motif). Interacts (via ANK repeats) with RFX7 (via PxLPxI/L motif). Interacts with AHRR. Interacts with NEK6.

The protein localises to the cytoplasm. Its subcellular location is the cytoskeleton. It localises to the membrane. Its function is as follows. May regulate the interaction between the 3M complex and the histone deacetylases HDAC4 and HDAC5. May also regulate LRP2/megalin. This chain is Ankyrin repeat family A protein 2 (ANKRA2), found in Bos taurus (Bovine).